The primary structure comprises 146 residues: MNPAHLLVLAAVCVSLLGASSVPPRPLNLINFQRMIQCTTRRSAWDFTNYGCYCGAGGSGTPVDELDRCCKVHDDCYGAAEKYHRCSPKLTLYTSTCSSQTGSVTCKDNGTKCKAFVCNCDRTAALCFGRAPYNKNNENINPNRCR.

The first 21 residues, 1 to 21, serve as a signal peptide directing secretion; the sequence is MNPAHLLVLAAVCVSLLGASS. Positions 22-27 are excised as a propeptide; the sequence is VPPRPL. 7 disulfide bridges follow: cysteine 38-cysteine 97, cysteine 52-cysteine 145, cysteine 54-cysteine 70, cysteine 69-cysteine 127, cysteine 76-cysteine 120, cysteine 86-cysteine 113, and cysteine 106-cysteine 118. The Ca(2+) site is built by tyrosine 53, glycine 55, and glycine 57. The active site involves histidine 73. Aspartate 74 contributes to the Ca(2+) binding site. The N-linked (GlcNAc...) asparagine glycan is linked to asparagine 109. Residue aspartate 121 is part of the active site.

This sequence belongs to the phospholipase A2 family. Group I subfamily. D49 sub-subfamily. Ca(2+) serves as cofactor. In terms of tissue distribution, expressed by the venom gland.

It is found in the secreted. The catalysed reaction is a 1,2-diacyl-sn-glycero-3-phosphocholine + H2O = a 1-acyl-sn-glycero-3-phosphocholine + a fatty acid + H(+). Its function is as follows. PLA2 catalyzes the calcium-dependent hydrolysis of the 2-acyl groups in 3-sn-phosphoglycerides. The sequence is that of Basic phospholipase A2 from Micrurus corallinus (Brazilian coral snake).